Here is a 124-residue protein sequence, read N- to C-terminus: Small ribosomal subunit protein uS12cz/uS12cy (124 aa).

Belongs to the universal ribosomal protein uS12 family. Part of the 30S ribosomal subunit.

The protein resides in the plastid. Its subcellular location is the chloroplast. In terms of biological role, with S4 and S5 plays an important role in translational accuracy. Located at the interface of the 30S and 50S subunits. The sequence is that of Small ribosomal subunit protein uS12cz/uS12cy (rps12-A) from Zea mays (Maize).